The chain runs to 387 residues: 3-hydroxy-D-aspartate aldolase (387 aa).

Residue Lys62 is modified to N6-(pyridoxal phosphate)lysine. Pyridoxal 5'-phosphate-binding positions include Gln85, Thr238, 256–257 (GS), and Tyr265. Mg(2+) contacts are provided by His355 and Asp357.

This sequence belongs to the DSD1 family. Homodimer. Pyridoxal 5'-phosphate is required as a cofactor. Mg(2+) serves as cofactor.

It carries out the reaction (3S)-3-hydroxy-D-aspartate = glyoxylate + glycine. The catalysed reaction is (3R)-3-hydroxy-D-aspartate = glyoxylate + glycine. In terms of biological role, catalyzes the condensation of glyoxylate and glycine into (2R,3S)-beta-hydroxyaspartate ((3S)-3-hydroxy-D-aspartate). Is essential for the growth of P.denitrificans in the presence of glycolate and glyoxylate since it functions in glyoxylate assimilation via the beta-hydroxyaspartate cycle (BHAC). Is also able to catalyze the reverse reaction in vitro, i.e. the cleavage of (3S)-3-hydroxy-D-aspartate, and that of D-threonine to a lesser extent. The protein is 3-hydroxy-D-aspartate aldolase of Paracoccus denitrificans (strain Pd 1222).